The primary structure comprises 55 residues: Large ribosomal subunit protein bL33 (55 aa).

It belongs to the bacterial ribosomal protein bL33 family.

The chain is Large ribosomal subunit protein bL33 from Aliivibrio fischeri (strain ATCC 700601 / ES114) (Vibrio fischeri).